The chain runs to 49 residues: uncharacterized protein (49 aa).

A helical transmembrane segment spans residues 8-28 (FFLFSSGVLQATTLLLVILIF).

Its subcellular location is the cell membrane. This is an uncharacterized protein from Bacillus subtilis (strain 168).